A 772-amino-acid polypeptide reads, in one-letter code: Ribosomal protein S6 kinase alpha-4 (772 aa).

One can recognise a Protein kinase 1 domain in the interval 33–301; that stretch reads FELLKVLGTG…AQEVRNHPFF (269 aa). ATP-binding positions include 39–47 and Lys-65; that span reads LGTGAYGKV. Catalysis depends on Asp-161, which acts as the Proton acceptor. The residue at position 196 (Ser-196) is a Phosphoserine; by autocatalysis. The AGC-kinase C-terminal domain maps to 302–371; that stretch reads QGLDWVALAA…VAPSILFDHN (70 aa). Ser-343 is subject to Phosphoserine; by MAPK1, MAPK3 and MAPK14. The residue at position 347 (Ser-347) is a Phosphoserine. 2 positions are modified to phosphoserine; by autocatalysis: Ser-360 and Ser-365. In terms of domain architecture, Protein kinase 2 spans 411–674; the sequence is DLREPALGQG…LEGLRGSSWL (264 aa). ATP is bound by residues 417–425 and Lys-440; that span reads LGQGSFSVC. Asp-530 serves as the catalytic Proton acceptor. Position 542 is a phosphothreonine (Thr-542). A Phosphothreonine; by MAPK1, MAPK3 and MAPK14 modification is found at Thr-568. A phosphoserine mark is found at Ser-634 and Ser-678. 2 disordered regions span residues 673 to 696 and 728 to 772; these read WLQDGSARSSPPLRTPDVLESSGP and AKRR…LPPS. Thr-687 bears the Phosphothreonine mark. Residues 725–772 are required for nuclear targeting and association with MAPK14; the sequence is APLAKRRKQKLRSATASRRGSPAPANPGRAPVASKGAPRRANGPLPPS. A Phosphoserine; by autocatalysis modification is found at Ser-737. At Ser-745 the chain carries Phosphoserine.

This sequence belongs to the protein kinase superfamily. AGC Ser/Thr protein kinase family. S6 kinase subfamily. Forms a complex with either MAPK1/ERK2 or MAPK3/ERK1 in quiescent cells which transiently dissociates following mitogenic stimulation. Also associates with MAPK14/p38-alpha. Activated RPS6KA4 associates with and phosphorylates the NF-kappa-B p65 subunit RELA. Mg(2+) is required as a cofactor. Post-translationally, ser-343 and Thr-568 phosphorylation is required for kinase activity. Ser-343 and Ser-196 are autophosphorylated by the C-terminal kinase domain, and their phosphorylation is essential for the catalytic activity of the N-terminal kinase domain. Phosphorylated at Ser-343, Thr-568 and Thr-687 by MAPK1/ERK2, MAPK3/ERK1 and MAPK14/p38-alpha. Autophosphorylated at Ser-737 and Ser-745 by the N-terminal kinase domain.

It is found in the nucleus. It carries out the reaction L-seryl-[protein] + ATP = O-phospho-L-seryl-[protein] + ADP + H(+). It catalyses the reaction L-threonyl-[protein] + ATP = O-phospho-L-threonyl-[protein] + ADP + H(+). Its activity is regulated as follows. Activated by phosphorylation at Ser-343, Thr-568 and Thr-687 by MAPK1/ERK2, MAPK3/ERK1 and MAPK14/p38-alpha, and by further autophosphorylation of Ser-196, Ser-360 and Ser-365 by the activated C-terminal kinase domain. Functionally, serine/threonine-protein kinase that is required for the mitogen or stress-induced phosphorylation of the transcription factors CREB1 and ATF1 and for the regulation of the transcription factor RELA, and that contributes to gene activation by histone phosphorylation and functions in the regulation of inflammatory genes. Phosphorylates CREB1 and ATF1 in response to mitogenic or stress stimuli such as UV-C irradiation, epidermal growth factor (EGF) and anisomycin. Plays an essential role in the control of RELA transcriptional activity in response to TNF. Phosphorylates 'Ser-10' of histone H3 in response to mitogenics, stress stimuli and EGF, which results in the transcriptional activation of several immediate early genes, including proto-oncogenes c-fos/FOS and c-jun/JUN. May also phosphorylate 'Ser-28' of histone H3. Mediates the mitogen- and stress-induced phosphorylation of high mobility group protein 1 (HMGN1/HMG14). In lipopolysaccharide-stimulated primary macrophages, acts downstream of the Toll-like receptor TLR4 to limit the production of pro-inflammatory cytokines. Functions probably by inducing transcription of the MAP kinase phosphatase DUSP1 and the anti-inflammatory cytokine interleukin 10 (IL10), via CREB1 and ATF1 transcription factors. This chain is Ribosomal protein S6 kinase alpha-4 (RPS6KA4), found in Homo sapiens (Human).